The primary structure comprises 107 residues: UPF0060 membrane protein ZMO1566 (107 aa).

Transmembrane regions (helical) follow at residues 4 to 24 (LLYI…WAWI), 29 to 49 (SPLW…LLTF), 55 to 75 (AGKA…LWSW), and 84 to 104 (HWDL…LWMP).

It belongs to the UPF0060 family.

It is found in the cell inner membrane. In Zymomonas mobilis subsp. mobilis (strain ATCC 31821 / ZM4 / CP4), this protein is UPF0060 membrane protein ZMO1566.